Consider the following 107-residue polypeptide: MPGRGKGGKGGKGYGKVGAKRHAKKALRETILGVTKPAIRRLARRGGVKRISSLVYEETRAVLKGFLESVIRDSVTYTEHAKRKTVTALDVVYALKRQGKTLYGFGG.

The segment covering 1–16 (MPGRGKGGKGGKGYGK) has biased composition (gly residues). Residues 1 to 23 (MPGRGKGGKGGKGYGKVGAKRHA) are disordered. The DNA-binding element occupies 17–21 (VGAKR).

It belongs to the histone H4 family. As to quaternary structure, the nucleosome is a histone octamer containing two molecules each of H2A, H2B, H3 and H4 assembled in one H3-H4 heterotetramer and two H2A-H2B heterodimers. The octamer wraps approximately 147 bp of DNA.

It localises to the nucleus. The protein localises to the chromosome. Core component of nucleosome. Nucleosomes wrap and compact DNA into chromatin, limiting DNA accessibility to the cellular machineries which require DNA as a template. Histones thereby play a central role in transcription regulation, DNA repair, DNA replication and chromosomal stability. DNA accessibility is regulated via a complex set of post-translational modifications of histones, also called histone code, and nucleosome remodeling. The protein is Histone H4 of Euplotes crassus.